The sequence spans 512 residues: Maturase K (512 aa).

This sequence belongs to the intron maturase 2 family. MatK subfamily.

It is found in the plastid. The protein resides in the chloroplast. In terms of biological role, usually encoded in the trnK tRNA gene intron. Probably assists in splicing its own and other chloroplast group II introns. This chain is Maturase K, found in Amorphophallus paeoniifolius (Whitespot giant arum).